We begin with the raw amino-acid sequence, 276 residues long: Pantothenate synthetase (276 aa).

27–34 provides a ligand contact to ATP; it reads MGNLHDGH. Histidine 34 functions as the Proton donor in the catalytic mechanism. Glutamine 58 contributes to the (R)-pantoate binding site. Glutamine 58 is a binding site for beta-alanine. 145 to 148 serves as a coordination point for ATP; that stretch reads GKKD. A (R)-pantoate-binding site is contributed by glutamine 151. Residues isoleucine 174 and 182-185 contribute to the ATP site; that span reads LSSR.

The protein belongs to the pantothenate synthetase family. As to quaternary structure, homodimer.

The protein localises to the cytoplasm. It catalyses the reaction (R)-pantoate + beta-alanine + ATP = (R)-pantothenate + AMP + diphosphate + H(+). Its pathway is cofactor biosynthesis; (R)-pantothenate biosynthesis; (R)-pantothenate from (R)-pantoate and beta-alanine: step 1/1. In terms of biological role, catalyzes the condensation of pantoate with beta-alanine in an ATP-dependent reaction via a pantoyl-adenylate intermediate. The polypeptide is Pantothenate synthetase (Aromatoleum aromaticum (strain DSM 19018 / LMG 30748 / EbN1) (Azoarcus sp. (strain EbN1))).